A 142-amino-acid chain; its full sequence is Small ribosomal subunit protein uS12 (142 aa).

Belongs to the universal ribosomal protein uS12 family. Part of the 30S ribosomal subunit.

Functionally, with S4 and S5 plays an important role in translational accuracy. Located at the interface of the 30S and 50S subunits. This is Small ribosomal subunit protein uS12 from Methanothrix thermoacetophila (strain DSM 6194 / JCM 14653 / NBRC 101360 / PT) (Methanosaeta thermophila).